The following is a 272-amino-acid chain: Shikimate dehydrogenase (NADP(+)) (272 aa).

Shikimate is bound by residues 14–16 and Thr61; that span reads SKS. The Proton acceptor role is filled by Lys65. NADP(+) is bound at residue Glu77. Shikimate is bound by residues Asn86 and Asp102. Residues 126–130, 150–155, and Met213 contribute to the NADP(+) site; these read GAGGA and NRTFSK. Tyr215 contributes to the shikimate binding site. NADP(+) is bound at residue Gly237.

Belongs to the shikimate dehydrogenase family. Homodimer.

It catalyses the reaction shikimate + NADP(+) = 3-dehydroshikimate + NADPH + H(+). Its pathway is metabolic intermediate biosynthesis; chorismate biosynthesis; chorismate from D-erythrose 4-phosphate and phosphoenolpyruvate: step 4/7. Functionally, involved in the biosynthesis of the chorismate, which leads to the biosynthesis of aromatic amino acids. Catalyzes the reversible NADPH linked reduction of 3-dehydroshikimate (DHSA) to yield shikimate (SA). The polypeptide is Shikimate dehydrogenase (NADP(+)) (Psychromonas ingrahamii (strain DSM 17664 / CCUG 51855 / 37)).